The primary structure comprises 238 residues: Ribonuclease PH (238 aa).

Phosphate is bound by residues Arg-86 and 124-126 (GTR).

This sequence belongs to the RNase PH family. As to quaternary structure, homohexameric ring arranged as a trimer of dimers.

The catalysed reaction is tRNA(n+1) + phosphate = tRNA(n) + a ribonucleoside 5'-diphosphate. Its function is as follows. Phosphorolytic 3'-5' exoribonuclease that plays an important role in tRNA 3'-end maturation. Removes nucleotide residues following the 3'-CCA terminus of tRNAs; can also add nucleotides to the ends of RNA molecules by using nucleoside diphosphates as substrates, but this may not be physiologically important. Probably plays a role in initiation of 16S rRNA degradation (leading to ribosome degradation) during starvation. The chain is Ribonuclease PH from Dichelobacter nodosus (strain VCS1703A).